The chain runs to 270 residues: Regulatory protein RecX (270 aa).

Belongs to the RecX family.

It is found in the cytoplasm. Modulates RecA activity. In Bacillus cereus (strain G9842), this protein is Regulatory protein RecX.